We begin with the raw amino-acid sequence, 430 residues long: GTPase Obg (430 aa).

Residues Met1–Leu158 enclose the Obg domain. A disordered region spans residues Lys118–Pro145. The 171-residue stretch at Ala159 to Glu329 folds into the OBG-type G domain. GTP is bound by residues Gly165 to Ser172, Phe190 to Lys194, Asp212 to Gly215, Asn282 to Asp285, and Ser310 to Ile312. Mg(2+)-binding residues include Ser172 and Thr192. Positions Lys352–Glu430 constitute an OCT domain.

It belongs to the TRAFAC class OBG-HflX-like GTPase superfamily. OBG GTPase family. In terms of assembly, monomer. Requires Mg(2+) as cofactor.

It localises to the cytoplasm. Functionally, an essential GTPase which binds GTP, GDP and possibly (p)ppGpp with moderate affinity, with high nucleotide exchange rates and a fairly low GTP hydrolysis rate. Plays a role in control of the cell cycle, stress response, ribosome biogenesis and in those bacteria that undergo differentiation, in morphogenesis control. The sequence is that of GTPase Obg from Staphylococcus aureus (strain bovine RF122 / ET3-1).